A 49-amino-acid polypeptide reads, in one-letter code: Osteocalcin (49 aa).

The Gla domain maps to Tyr-1–Gly-47. A Hydroxyproline modification is found at Pro-9. Ca(2+) contacts are provided by Glu-17, Glu-21, Glu-24, and Asp-30. 4-carboxyglutamate is present on residues Glu-17, Glu-21, and Glu-24. A disulfide bond links Cys-23 and Cys-29.

This sequence belongs to the osteocalcin/matrix Gla protein family. In terms of processing, gamma-carboxyglutamate residues are formed by vitamin K dependent carboxylation by GGCX. These residues are essential for the binding of calcium. Decarboxylation promotes the hormone activity.

Its subcellular location is the secreted. In terms of biological role, the carboxylated form is one of the main organic components of the bone matrix, which constitutes 1-2% of the total bone protein. It acts as a negative regulator of bone formation and is required to limit bone formation without impairing bone resorption or mineralization. The carboxylated form binds strongly to apatite and calcium. Its function is as follows. The uncarboxylated form acts as a hormone secreted by osteoblasts, which regulates different cellular processes, such as energy metabolism, male fertility and brain development. Regulates of energy metabolism by acting as a hormone favoring pancreatic beta-cell proliferation, insulin secretion and sensitivity and energy expenditure. Uncarboxylated osteocalcin hormone also promotes testosterone production in the testes: acts as a ligand for G protein-coupled receptor GPRC6A at the surface of Leydig cells, initiating a signaling response that promotes the expression of enzymes required for testosterone synthesis in a CREB-dependent manner. Also acts as a regulator of brain development: osteocalcin hormone crosses the blood-brain barrier and acts as a ligand for GPR158 on neurons, initiating a signaling response that prevents neuronal apoptosis in the hippocampus, favors the synthesis of all monoamine neurotransmitters and inhibits that of gamma-aminobutyric acid (GABA). Osteocalcin also crosses the placenta during pregnancy and maternal osteocalcin is required for fetal brain development. In Equus caballus (Horse), this protein is Osteocalcin (BGLAP).